A 33-amino-acid chain; its full sequence is Photosystem II reaction center protein Psb30 (33 aa).

Residues 5–25 (LALTLVSLVLVVSAGPLVVVL) form a helical membrane-spanning segment.

It belongs to the Psb30/Ycf12 family. PSII is composed of 1 copy each of membrane proteins PsbA, PsbB, PsbC, PsbD, PsbE, PsbF, PsbH, PsbI, PsbJ, PsbK, PsbL, PsbM, PsbT, PsbX, PsbY, PsbZ, Psb30/Ycf12, peripheral proteins of the oxygen-evolving complex and a large number of cofactors. It forms dimeric complexes.

The protein resides in the plastid. It localises to the chloroplast thylakoid membrane. Its function is as follows. A core subunit of photosystem II (PSII), required for optimal photosynthesis, probably helps stabilize the reaction center. The chain is Photosystem II reaction center protein Psb30 from Chlamydomonas reinhardtii (Chlamydomonas smithii).